A 525-amino-acid chain; its full sequence is AarF domain-containing protein kinase 1 (525 aa).

In terms of domain architecture, Protein kinase spans 148–477 (SFDDTPLGAA…HKKRDAGSFF (330 aa)). ATP contacts are provided by residues 154–162 (LGAASLAQV) and Lys176. Asp308 serves as the catalytic Proton acceptor.

It belongs to the protein kinase superfamily. ADCK protein kinase family.

The protein resides in the mitochondrion. Functionally, appears to be essential for maintaining mitochondrial cristae formation and mitochondrial function by acting via YME1L1 in a kinase-independent manner to regulate essential mitochondrial structural proteins OPA1 and IMMT. The action of this enzyme is not yet clear. It is not known if it has protein kinase activity and what type of substrate it would phosphorylate (Ser, Thr or Tyr). This chain is AarF domain-containing protein kinase 1 (Adck1), found in Mus musculus (Mouse).